The sequence spans 337 residues: Large ribosomal subunit protein uL3 (337 aa).

The segment at methionine 1–serine 29 is disordered.

Belongs to the universal ribosomal protein uL3 family. As to quaternary structure, part of the 50S ribosomal subunit. Forms a cluster with proteins L14 and L24e.

One of the primary rRNA binding proteins, it binds directly near the 3'-end of the 23S rRNA, where it nucleates assembly of the 50S subunit. In Methanoregula boonei (strain DSM 21154 / JCM 14090 / 6A8), this protein is Large ribosomal subunit protein uL3.